The sequence spans 509 residues: UDP-N-acetylmuramoylalanine--D-glutamate ligase (509 aa).

Residue 116–122 coordinates ATP; it reads GTNGKST.

This sequence belongs to the MurCDEF family.

The protein localises to the cytoplasm. It catalyses the reaction UDP-N-acetyl-alpha-D-muramoyl-L-alanine + D-glutamate + ATP = UDP-N-acetyl-alpha-D-muramoyl-L-alanyl-D-glutamate + ADP + phosphate + H(+). The protein operates within cell wall biogenesis; peptidoglycan biosynthesis. Its function is as follows. Cell wall formation. Catalyzes the addition of glutamate to the nucleotide precursor UDP-N-acetylmuramoyl-L-alanine (UMA). This chain is UDP-N-acetylmuramoylalanine--D-glutamate ligase, found in Wolbachia pipientis wMel.